The primary structure comprises 600 residues: Oligopeptide-binding protein OppA (600 aa).

The first 22 residues, 1–22 (MKKLKVTLLASSVVLAAALLSA), serve as a signal peptide directing secretion. Cys23 is lipidated: N-palmitoyl cysteine. Residue Cys23 is the site of S-diacylglycerol cysteine attachment.

Belongs to the bacterial solute-binding protein 5 family. In terms of assembly, the complex is composed of two ATP-binding proteins (OppD and OppF), two transmembrane proteins (OppB and OppC) and a solute-binding protein (OppA).

It localises to the cell membrane. In terms of biological role, part of the ABC transporter complex OppABCDF involved in the uptake of oligopeptides. This is Oligopeptide-binding protein OppA (oppA) from Lactococcus lactis subsp. lactis (strain IL1403) (Streptococcus lactis).